A 172-amino-acid chain; its full sequence is Ribosome maturation factor RimM (172 aa).

Positions 96–168 (EGEFYYHQII…RVDVELMEGL (73 aa)) constitute a PRC barrel domain.

This sequence belongs to the RimM family. Binds ribosomal protein uS19.

Its subcellular location is the cytoplasm. Its function is as follows. An accessory protein needed during the final step in the assembly of 30S ribosomal subunit, possibly for assembly of the head region. Essential for efficient processing of 16S rRNA. May be needed both before and after RbfA during the maturation of 16S rRNA. It has affinity for free ribosomal 30S subunits but not for 70S ribosomes. This chain is Ribosome maturation factor RimM, found in Streptococcus pyogenes serotype M28 (strain MGAS6180).